The following is a 199-amino-acid chain: Female-specific protein transformer (199 aa).

Disordered stretches follow at residues 1–121 (MDAD…RTPR) and 178–199 (YRAGPFRPHPRYSYRNDRQAPN). Positions 20-37 (REKMPYFADEVRERDRVR) are enriched in basic and acidic residues. 3 stretches are compositionally biased toward basic residues: residues 56–69 (RRSRHERPRSRSRT), 77–92 (CQRRLSRSYVRHRSGS), and 102–119 (SRRRRSRSRSRSRGRSRT).

The protein localises to the nucleus speckle. Its function is as follows. Member of the regulatory pathway controlling female somatic sexual differentiation, regulated by Sxl. Activates dsx female-specific splicing by promoting the formation of a splicing enhancer complex which consists of tra, tra2 and sr proteins. In Drosophila virilis (Fruit fly), this protein is Female-specific protein transformer (tra).